Here is a 344-residue protein sequence, read N- to C-terminus: Anthranilate phosphoribosyltransferase (344 aa).

Residues G85, 88–89 (GD), T93, 95–98 (NIST), 113–121 (KHGGRSVSS), and S125 contribute to the 5-phospho-alpha-D-ribose 1-diphosphate site. Residue G85 participates in anthranilate binding. S97 is a binding site for Mg(2+). Residue R171 coordinates anthranilate. Residues D230 and E231 each contribute to the Mg(2+) site.

Belongs to the anthranilate phosphoribosyltransferase family. In terms of assembly, homodimer. Requires Mg(2+) as cofactor.

The catalysed reaction is N-(5-phospho-beta-D-ribosyl)anthranilate + diphosphate = 5-phospho-alpha-D-ribose 1-diphosphate + anthranilate. Its pathway is amino-acid biosynthesis; L-tryptophan biosynthesis; L-tryptophan from chorismate: step 2/5. Catalyzes the transfer of the phosphoribosyl group of 5-phosphorylribose-1-pyrophosphate (PRPP) to anthranilate to yield N-(5'-phosphoribosyl)-anthranilate (PRA). This chain is Anthranilate phosphoribosyltransferase, found in Acidovorax ebreus (strain TPSY) (Diaphorobacter sp. (strain TPSY)).